A 186-amino-acid polypeptide reads, in one-letter code: Temperature-induced lipocalin-1 (186 aa).

An HPR (Hydrophobic proline-rich) motif is present at residues P90–P97. A disordered region spans residues K154–S174. A compositionally biased stretch (polar residues) spans T158–P171.

It belongs to the calycin superfamily. Lipocalin family. As to expression, expressed ubiquitously at similar levels, except in dry seeds (at protein level). Present in seeds.

It is found in the cell membrane. It localises to the cytoplasm. The protein localises to the plastid. Its subcellular location is the chloroplast membrane. Its function is as follows. Involved in basal (BT) and acquired thermotolerance (AT), probably by preventing plasma membrane lipids peroxidation induced by severe heat-shock (HS). Lipocalin that confers protection against oxidative stress caused by heat, freezing, paraquat and light. Confers resistance to high salt (NaCl) levels, probably by protecting chloroplasts from ion toxicity via ion homeostasis maintenance. Required for seed longevity by ensuring polyunsaturated lipids integrity. The sequence is that of Temperature-induced lipocalin-1 from Arabidopsis thaliana (Mouse-ear cress).